Here is a 644-residue protein sequence, read N- to C-terminus: Alkyldihydroxyacetonephosphate synthase, peroxisomal (644 aa).

The N-terminal 44 residues, 1 to 44 (MAEAAGEAGASERDPDAVRARRRLRVLSGHLLGRPQEAPSTNEC), are a transit peptide targeting the peroxisome. A disordered region spans residues 1–70 (MAEAAGEAGA…PAAPESGTIP (70 aa)). The segment covering 10–19 (ASERDPDAVR) has biased composition (basic and acidic residues). The segment covering 49-64 (AASAAGASPAASPAAP) has biased composition (low complexity). 2 positions are modified to phosphoserine: Ser51 and Ser56. Lys88 is modified (N6-acetyllysine). The FAD-binding PCMH-type domain occupies 188–370 (FERIPDIVVW…TEATIKIRPT (183 aa)). FAD is bound by residues 220-226 (PIGGGTS), 289-295 (DSLEFSI), and 302-305 (TRAS). Lys333 bears the N6-acetyllysine mark. Residue 354-360 (EGTLGVI) coordinates FAD. Residue Arg501 coordinates substrate. The Proton donor/acceptor role is filled by Tyr564. 2 important for enzyme activity regions span residues 601 to 603 (HHH) and 640 to 644 (NRNLL).

This sequence belongs to the FAD-binding oxidoreductase/transferase type 4 family. Homodimer. Requires FAD as cofactor.

The protein localises to the peroxisome membrane. Its subcellular location is the peroxisome. It catalyses the reaction a long chain fatty alcohol + a 1-acylglycerone 3-phosphate = a 1-O-alkylglycerone 3-phosphate + a long-chain fatty acid + H(+). The catalysed reaction is hexadecan-1-ol + 1-hexadecanoylglycerone 3-phosphate = 1-O-hexadecylglycerone 3-phosphate + hexadecanoate + H(+). It carries out the reaction 1-hexadecanoylglycerone 3-phosphate + a long-chain fatty acid = a 1-acylglycerone 3-phosphate + hexadecanoate. Its pathway is glycerolipid metabolism; ether lipid biosynthesis. With respect to regulation, inhibited by divalent cation Mg(2+). Functionally, catalyzes the exchange of the acyl chain in acyl-dihydroxyacetonephosphate (acyl-DHAP) for a long chain fatty alcohol, yielding the first ether linked intermediate, i.e. alkyl-dihydroxyacetonephosphate (alkyl-DHAP), in the pathway of ether lipid biosynthesis. This is Alkyldihydroxyacetonephosphate synthase, peroxisomal (Agps) from Rattus norvegicus (Rat).